An 868-amino-acid polypeptide reads, in one-letter code: Leucine-rich repeat receptor-like serine/threonine-protein kinase At2g14510 (868 aa).

Positions 1-23 (METRNKFMLLACATFSIMSLVKS) are cleaved as a signal peptide. Residues 24–510 (QNQQGFISLD…KHQPKSWLVA (487 aa)) lie on the Extracellular side of the membrane. 8 N-linked (GlcNAc...) asparagine glycosylation sites follow: N48, N68, N231, N235, N258, N291, N433, and N446. LRR repeat units follow at residues 412–435 (RIIS…QNLT), 436–458 (MLRE…LATI), and 460–482 (PLLV…LQDR). N495 is a glycosylation site (N-linked (GlcNAc...) asparagine). Residues 511-531 (IVASISCVAVTIIVLVLIFIF) traverse the membrane as a helical segment. Topologically, residues 532–868 (RRRKSSTRKV…TFISDIPSAR (337 aa)) are cytoplasmic. One can recognise a Protein kinase domain in the interval 563–832 (NNFEVVLGKG…NMTRVAHELN (270 aa)). ATP contacts are provided by residues 569–577 (LGKGGFGVV) and K590. The residue at position 635 (Y635) is a Phosphotyrosine. The active-site Proton acceptor is the D687. S721 carries the phosphoserine modification. Phosphothreonine occurs at positions 722 and 727. Y735 carries the phosphotyrosine modification.

This sequence belongs to the protein kinase superfamily. Ser/Thr protein kinase family.

The protein localises to the cell membrane. It carries out the reaction L-seryl-[protein] + ATP = O-phospho-L-seryl-[protein] + ADP + H(+). The enzyme catalyses L-threonyl-[protein] + ATP = O-phospho-L-threonyl-[protein] + ADP + H(+). The polypeptide is Leucine-rich repeat receptor-like serine/threonine-protein kinase At2g14510 (Arabidopsis thaliana (Mouse-ear cress)).